We begin with the raw amino-acid sequence, 416 residues long: MSLKVFLQAGVACAALSLAGAAGASAEPLKIALVETLSGPQASTGLLYRAAVLYQLGKINEAGGFNGEKIQILEYDNQGGPVGAADRVKAAIADGAQIIVQGSSSAVAGQITEDVRKYNLRNKGKEVLYLNLGAEALELTGSKCHFYHFRFSPNAAIRFKTVAQGMKDKGILGERAYSINQNYSWGVDVENTVVANAKEIGYEVVDKTLHEVNKIQDFSPYVAKIQAANVDTVFTGNWSNDLLLLMKAASGAGLKAKFATSFLDQPGNIGNAGAIAEGHIVSTPFNPEANGEASMAFAEDYKKVTGHYPSYVEPAAVFGLQLFGEALKNVKPGEGKINTTDIALAIENASVKTPMGDYSMRSDDHQAKFPMVVQEVSKKARIKADGTEYGFLPFKTFTGDESIDPVQESCSMKRPG.

The N-terminal stretch at 1–26 is a signal peptide; sequence MSLKVFLQAGVACAALSLAGAAGASA.

Belongs to the leucine-binding protein family.

Functionally, component of an amino-acid transport system. This Brucella abortus (strain 2308) protein is Leu/Ile/Val-binding protein homolog 4.